A 99-amino-acid chain; its full sequence is DNA-directed RNA polymerase subunit omega (99 aa).

It belongs to the RNA polymerase subunit omega family. The RNAP catalytic core consists of 2 alpha, 1 beta, 1 beta' and 1 omega subunit. When a sigma factor is associated with the core the holoenzyme is formed, which can initiate transcription.

The enzyme catalyses RNA(n) + a ribonucleoside 5'-triphosphate = RNA(n+1) + diphosphate. In terms of biological role, promotes RNA polymerase assembly. Latches the N- and C-terminal regions of the beta' subunit thereby facilitating its interaction with the beta and alpha subunits. This chain is DNA-directed RNA polymerase subunit omega (rpoZ), found in Xylella fastidiosa (strain 9a5c).